The following is a 363-amino-acid chain: Glutamate--cysteine ligase (363 aa).

The protein belongs to the glutamate--cysteine ligase type 2 family. YbdK subfamily.

It carries out the reaction L-cysteine + L-glutamate + ATP = gamma-L-glutamyl-L-cysteine + ADP + phosphate + H(+). Its function is as follows. Catalyzes the synthesis of gamma-glutamylcysteine (gamma-GC), the main low-molecular-weight thiol compound instead of glutathione in halophilic archaea. The protein is Glutamate--cysteine ligase of Haloquadratum walsbyi (strain DSM 16790 / HBSQ001).